The chain runs to 1121 residues: Phytochrome 2 (1121 aa).

The region spanning 214 to 393 is the GAF domain; that stretch reads DIGLLCDTVV…VFGMQLNMEV (180 aa). C319 is a binding site for phytochromobilin. PAS domains follow at residues 608–679 and 742–813; these read VANE…SQGE and DYKT…TKFM. Residues 893–1113 form the Histidine kinase domain; that stretch reads YIRQEIKNPL…VVYVELPMAQ (221 aa).

This sequence belongs to the phytochrome family. As to quaternary structure, homodimer. Contains one covalently linked phytochromobilin chromophore.

Functionally, regulatory photoreceptor which exists in two forms that are reversibly interconvertible by light: the Pr form that absorbs maximally in the red region of the spectrum and the Pfr form that absorbs maximally in the far-red region. Photoconversion of Pr to Pfr induces an array of morphogenic responses, whereas reconversion of Pfr to Pr cancels the induction of those responses. Pfr controls the expression of a number of nuclear genes including those encoding the small subunit of ribulose-bisphosphate carboxylase, chlorophyll A/B binding protein, protochlorophyllide reductase, rRNA, etc. It also controls the expression of its own gene(s) in a negative feedback fashion. In Ceratodon purpureus (Fire moss), this protein is Phytochrome 2 (PHY2).